We begin with the raw amino-acid sequence, 442 residues long: MEESRQLESSIDRLLNEEKQMRLAENVAGTRKAATEILKLCFEAKDWKLLNEQILNLSKKRGQLKQAVQSMVQQAMQYIDQTLDIETRIELIKTLNNVAAGKIYVEIERARLTKMLAKIKEEQGLIAEAADLMQEVAVETFGAMAKTEKIAFILEQVRLCLDQKDFVRAQILSRKINPRVFDADTTKEKKKPKEGENMVEEAPADIPTLLVLKRIYYELMIRYYSHNNEYIEICRSYKAIYDIPSVKENPEQWIPVLRKICWFLALAPHDPMQSSLLNATLEDKKLSEIPDFKMLLKQIVTMEVIQWTSLWNKYKDEFENEKNMIGGSLGDKAGEDLKLRIIEHNILVVSKYYSRITFKRLAELLCLTTEEAEKHLSEMVVSKALIAKIDRPSGIICFQIVKDSNEILNSWATNLEKLLDLVEKSCHQIHKETMVHKVALRA.

Positions 1 to 129 (MEESRQLESS…KEEQGLIAEA (129 aa)) form a coiled coil. The PCI domain occupies 232–403 (EICRSYKAIY…GIICFQIVKD (172 aa)).

The protein belongs to the proteasome subunit p55 family. In terms of assembly, component of the 19S regulatory particle (RP/PA700) lid subcomplex of the 26S proteasome. The 26S proteasome is composed of a core protease (CP), known as the 20S proteasome, capped at one or both ends by the 19S regulatory particle (RP/PA700). The RP/PA700 complex is composed of at least 17 different subunits in two subcomplexes, the base and the lid, which form the portions proximal and distal to the 20S proteolytic core, respectively. As to expression, ubiquitous with highest expression in flowers.

It is found in the cytoplasm. Its subcellular location is the nucleus. Its function is as follows. Acts as a regulatory subunit of the 26 proteasome which is involved in the ATP-dependent degradation of ubiquitinated proteins. Acts redundantly with RPN5A. The chain is 26S proteasome non-ATPase regulatory subunit 12 homolog B (RPN5B) from Arabidopsis thaliana (Mouse-ear cress).